An 883-amino-acid polypeptide reads, in one-letter code: Sodium/sulfate cotransporter 2 (883 aa).

A run of 6 helical transmembrane segments spans residues 3-23 (FGWQGSVSIAFTALAFVVMAA), 30-50 (VTFTVLLAFLTAFDGQIVTVA), 60-80 (GLLTVIFLYWVAEGITQTGGL), 106-126 (MCLSAFLNNTPCVTFMIPILI), 139-159 (LLIPLSYASVLGGTCTSIGTS), and 185-205 (IFDIAPYGVPYALWGFVFILL). RCK C-terminal domains lie at 211–295 (LPGN…EFGL), 317–401 (VFTP…SKNN), 406–491 (VRAV…FPGL), and 497–583 (EQVD…DKSF). 6 helical membrane passes run 600–620 (MVIGVLLATGMVLTQIVGGLK), 624–644 (YIHLWPAAVLTSALMLLTGCM), 657–677 (VYLTIAAAFGVSAALEGTGVA), 693–713 (SDGAALIAIYIATAMLSELLT), 774–794 (FAIIGAPFQIWLMIVAGFILC), and 802–822 (VWIVSWICTAGIVLLPALYFL). Positions 857–883 (QASRTGSDGTGSSDSPRALGVPKVITA) are disordered. The span at 861-871 (TGSDGTGSSDS) shows a compositional bias: low complexity.

This sequence belongs to the divalent anion:Na+ symporter (DASS) superfamily. Na+/sulfate symporter (TC 2.A.47.4) family.

It localises to the cell membrane. Functionally, na(+)/sulfate cotransporter with a probable high-affinity for sulfate and a proteasome dependent turnover. The chain is Sodium/sulfate cotransporter 2 (SLT2) from Chlamydomonas reinhardtii (Chlamydomonas smithii).